We begin with the raw amino-acid sequence, 290 residues long: Enoyl-CoA hydratase, mitochondrial (290 aa).

Residues 1–27 (MAALRALLPRACSSLLSSVRCPELRRF) constitute a mitochondrion transit peptide. Residue 98 to 101 (ADIK) coordinates substrate. Lysine 101 is subject to N6-acetyllysine; alternate. Lysine 101 is modified (N6-succinyllysine; alternate). Serine 114 carries the post-translational modification Phosphoserine. Lysine 115 bears the N6-acetyllysine; alternate mark. At lysine 115 the chain carries N6-succinyllysine; alternate. Glycine 141 contributes to the substrate binding site. Lysine 204 is subject to N6-succinyllysine. At lysine 211 the chain carries N6-acetyllysine. Lysine 217 carries the N6-acetyllysine; alternate modification. Lysine 217 is modified (N6-succinyllysine; alternate).

It belongs to the enoyl-CoA hydratase/isomerase family. As to quaternary structure, homohexamer; dimer of trimers. In terms of processing, acetylation of Lys-101 is observed in liver mitochondria from fasted mice but not from fed mice.

The protein resides in the mitochondrion matrix. It catalyses the reaction a (3S)-3-hydroxyacyl-CoA = a (2E)-enoyl-CoA + H2O. It carries out the reaction a (3E)-enoyl-CoA = a 4-saturated (2E)-enoyl-CoA. The catalysed reaction is (3E)-hexenoyl-CoA = (2E)-hexenoyl-CoA. The enzyme catalyses (3S)-3-hydroxybutanoyl-CoA = (2E)-butenoyl-CoA + H2O. It catalyses the reaction 3-hydroxyisovaleryl-CoA = 3-methylbut-2-enoyl-CoA + H2O. It carries out the reaction 3-hydroxypropanoyl-CoA = acryloyl-CoA + H2O. The catalysed reaction is 3-hydroxybutanoyl-CoA = (2E)-butenoyl-CoA + H2O. The enzyme catalyses 2-methylpropenoyl-CoA + H2O = (S)-3-hydroxyisobutanoyl-CoA. It catalyses the reaction (3S)-hydroxyhexanoyl-CoA = (2E)-hexenoyl-CoA + H2O. It carries out the reaction (3S)-hydroxydecanoyl-CoA = (2E)-decenoyl-CoA + H2O. Its pathway is lipid metabolism; fatty acid beta-oxidation. Converts unsaturated trans-2-enoyl-CoA species ((2E)-enoyl-CoA) to the corresponding (3S)-3-hydroxyacyl-CoA species through addition of a water molecule to the double bond. Catalyzes the hydration of medium- and short-chained fatty enoyl-CoA thioesters from 4 carbons long (C4) up to C16. Has high substrate specificity for crotonyl-CoA ((2E)-butenoyl-CoA) and moderate specificity for acryloyl-CoA, 3-methylcrotonyl-CoA (3-methyl-(2E)-butenoyl-CoA) and methacrylyl-CoA ((2E)-2-methylpropenoyl-CoA). Can bind tiglyl-CoA (2-methylcrotonoyl-CoA), but hydrates only a small amount of this substrate. Plays a key role in the beta-oxidation spiral of short- and medium-chain fatty acid oxidation. At a lower rate than the hydratase reaction, catalyzes the isomerase reaction of trans-3-enoyl-CoA species (such as (3E)-hexenoyl-CoA) to trans-2-enoyl-CoA species (such as (2E)-hexenoyl-CoA), which are subsequently hydrated to 3(S)-3-hydroxyacyl-CoA species (such as (3S)-hydroxyhexanoyl-CoA). This Mus musculus (Mouse) protein is Enoyl-CoA hydratase, mitochondrial.